The following is a 142-amino-acid chain: Small ribosomal subunit protein uS12 (142 aa).

Belongs to the universal ribosomal protein uS12 family. Part of the 30S ribosomal subunit.

In terms of biological role, with S4 and S5 plays an important role in translational accuracy. Located at the interface of the 30S and 50S subunits. This Thermoplasma volcanium (strain ATCC 51530 / DSM 4299 / JCM 9571 / NBRC 15438 / GSS1) protein is Small ribosomal subunit protein uS12.